Consider the following 275-residue polypeptide: Autophagy-related protein 5 (275 aa).

K129 participates in a covalent cross-link: Glycyl lysine isopeptide (Lys-Gly) (interchain with G-Cter in lgg-3/ATG12). Residues 221 to 231 (LSSSSSSSTDS) show a composition bias toward low complexity. The tract at residues 221 to 241 (LSSSSSSSTDSQSEHPPRLIS) is disordered.

The protein belongs to the ATG5 family. As to quaternary structure, most likely a component of a complex at least containing atg-5, lgg-3/ATG12, atg-16.1 and/or atg-16.2. Interacts with lgg-3/ATG12. Interacts with atg-16.1 (via N-terminus) and atg-16.2 (via N-terminus). Post-translationally, conjugated to lgg-3/ATG12; which is essential for autophagy.

Its subcellular location is the preautophagosomal structure membrane. Functionally, involved in autophagic vesicle formation. Conjugation with lgg-3/ATG12, through a ubiquitin-like conjugating system involving atg-7 as an E1-like activating enzyme and atg-10 as an E2-like conjugating enzyme, is essential for its function. Most likely a component of an atg-5-lgg-3-atg-16 complex that promotes autophagosome formation by associating with lgg-2, but not lgg-1, at the preautophagosomal membrane. Probably, as part of an atg-5-lgg-3-atg-16 complex, required for lgg-1 lipidation; the complex acts as an E3-like enzyme promoting atg-3-mediated lgg-1 lipidation. Furthermore, association with atg-16.2 is required for the nucleation of lgg-1 positive autophagic vesicles. The polypeptide is Autophagy-related protein 5 (Caenorhabditis elegans).